The following is a 514-amino-acid chain: MSLNAERSYKMKLRDVENAFKYRRIPYPKRSVELIALLAISCTFFLFMHTNKLNSRLKEMEVKLQPSEFSALGLTGNHISGHDAGKHDDINTLHGTYQYLKSTGQKVGYNVHDRRSSEEQLRTPTAHGHHHDHHSHHHHMHQQEKIDGHKHKASHDKQLAVPDNKHKEDEVHYEDDEDEVEENDDDLANDVGTTDSEGFNFKADLLNNTKYAEVDFVFFNRVPKVGSQSLMELMARLGKINGFTHARNKGSAHETIVMNKQRQNDLIADLLTRPKPHIYSQHIAYINFTRFHLPKPIYINLIRDPIDRIISWHYYIRAPWYYRDMQAKLGENAIPMPSEEFMNLDLDTCVRNHDPHCTFTQMQIKNPVGDHRRQTLFFCGMNQKLCMPFNSEAAMQKAKRTVETEYAVVGTWEDTNITLSVLEAYIPRYFRNAKVAYYLGKDRLSRVNRNNVTRIVSDETRLILRKNLTNEIEFYEFCKQRLYLQYAALSHGKRFGEDDYLLVPEQQNEYNEDY.

Topologically, residues 1–30 (MSLNAERSYKMKLRDVENAFKYRRIPYPKR) are cytoplasmic. Residues 31 to 50 (SVELIALLAISCTFFLFMHT) traverse the membrane as a helical; Signal-anchor for type II membrane protein segment. At 51 to 514 (NKLNSRLKEM…EQQNEYNEDY (464 aa)) the chain is on the lumenal side. Residues 112 to 121 (HDRRSSEEQL) show a composition bias toward basic and acidic residues. The disordered stretch occupies residues 112 to 185 (HDRRSSEEQL…DEDEVEENDD (74 aa)). A compositionally biased stretch (basic residues) spans 127-140 (HGHHHDHHSHHHHM). Over residues 155 to 170 (HDKQLAVPDNKHKEDE) the composition is skewed to basic and acidic residues. Residues 171–185 (VHYEDDEDEVEENDD) show a composition bias toward acidic residues. The N-linked (GlcNAc...) asparagine glycan is linked to Asn-207. Residue His-282 is part of the active site. N-linked (GlcNAc...) asparagine glycans are attached at residues Asn-287, Asn-416, Asn-451, and Asn-467.

This sequence belongs to the sulfotransferase 3 family. As to quaternary structure, interacts with wbl/windbeutel; the interaction is direct and does not require pip to be folded. Ovary-specific. Specifically expressed in the ventral follicle cells of stage 9-10 egg chambers. As to expression, expressed in ovaries. Specifically expressed in the ventral follicle cells of stage 9-10 egg chambers.

It localises to the golgi apparatus membrane. Functionally, sulfotransferase involved in dorsoventral axis patterning in early embryos. Required for the ventral activation of ea/easter by the protease snk in the perivitelline space between the embryonic membrane and the eggshell; activation of ea requires both activation of the ndl-gd-snk protease cascade and sulfation of a vitelline membrane component by pip. Probably acts by mediating the sulfation of some glycoprotein or glycosaminoglycan stably deposited in the vitelline membrane, whose ventrally localized modification leads to spatially restricted activation of the protease cascade resulting in localized activation of the spz Toll receptor ligand by ea. Probably required redundantly with isoform H for dorsoventral axis patterning in embryos. Lacks 2-O-sulfotransferase activity towards completely desulfated N-sulfated (CDSNS) heparin, chondroitin, and chondroitin sulfate A, B (dermatan sulfate), and C. Sulfates several components of the eggshell vitelline membrane, including Vml, Vm26Aa, Vm32E and psd/palisade/Fcp26Aa. In terms of biological role, probably required redundantly with isoform A for dorsoventral axis patterning in embryos. Its function is as follows. Lacks 2-O-sulfotransferase activity towards CDSNS heparin, chondroitin, and chondroitin sulfate A, B (dermatan sulfate), and C. This is Uronyl 2-sulfotransferase homolog pip from Drosophila melanogaster (Fruit fly).